Consider the following 612-residue polypeptide: Sulfite reductase [NADPH] hemoprotein beta-component (612 aa).

Residues methionine 1 to arginine 32 form a disordered region. [4Fe-4S] cluster contacts are provided by cysteine 469, cysteine 475, cysteine 514, and cysteine 518. Residue cysteine 518 participates in siroheme binding.

It belongs to the nitrite and sulfite reductase 4Fe-4S domain family. In terms of assembly, alpha(8)-beta(8). The alpha component is a flavoprotein, the beta component is a hemoprotein. Siroheme serves as cofactor. The cofactor is [4Fe-4S] cluster.

It catalyses the reaction hydrogen sulfide + 3 NADP(+) + 3 H2O = sulfite + 3 NADPH + 4 H(+). The protein operates within sulfur metabolism; hydrogen sulfide biosynthesis; hydrogen sulfide from sulfite (NADPH route): step 1/1. Component of the sulfite reductase complex that catalyzes the 6-electron reduction of sulfite to sulfide. This is one of several activities required for the biosynthesis of L-cysteine from sulfate. The sequence is that of Sulfite reductase [NADPH] hemoprotein beta-component from Methylorubrum populi (strain ATCC BAA-705 / NCIMB 13946 / BJ001) (Methylobacterium populi).